The following is a 196-amino-acid chain: Endonuclease V (196 aa).

Mg(2+) contacts are provided by D37 and D98.

Belongs to the endonuclease V family. The cofactor is Mg(2+).

The protein resides in the cytoplasm. It catalyses the reaction Endonucleolytic cleavage at apurinic or apyrimidinic sites to products with a 5'-phosphate.. In terms of biological role, DNA repair enzyme involved in the repair of deaminated bases. Selectively cleaves double-stranded DNA at the second phosphodiester bond 3' to a deoxyinosine leaving behind the intact lesion on the nicked DNA. This chain is Endonuclease V, found in Sulfurisphaera tokodaii (strain DSM 16993 / JCM 10545 / NBRC 100140 / 7) (Sulfolobus tokodaii).